The primary structure comprises 909 residues: DNA mismatch repair protein MutS (909 aa).

614 to 621 (GPNMAGKS) contributes to the ATP binding site. The interval 798 to 827 (LEENSPQNNDISKESSSSSNSHDKLESSVI) is disordered. Over residues 818–827 (SHDKLESSVI) the composition is skewed to basic and acidic residues.

It belongs to the DNA mismatch repair MutS family.

In terms of biological role, this protein is involved in the repair of mismatches in DNA. It is possible that it carries out the mismatch recognition step. This protein has a weak ATPase activity. In Clostridium novyi (strain NT), this protein is DNA mismatch repair protein MutS.